The primary structure comprises 76 residues: uncharacterized protein (76 aa).

Residues 40-60 (IVLNLVVLVGVVPLTWMFLGQ) form a helical membrane-spanning segment.

The protein resides in the membrane. This is an uncharacterized protein from Dictyostelium discoideum (Social amoeba).